The sequence spans 488 residues: Aspartyl/glutamyl-tRNA(Asn/Gln) amidotransferase subunit B (488 aa).

This sequence belongs to the GatB/GatE family. GatB subfamily. In terms of assembly, heterotrimer of A, B and C subunits.

It carries out the reaction L-glutamyl-tRNA(Gln) + L-glutamine + ATP + H2O = L-glutaminyl-tRNA(Gln) + L-glutamate + ADP + phosphate + H(+). It catalyses the reaction L-aspartyl-tRNA(Asn) + L-glutamine + ATP + H2O = L-asparaginyl-tRNA(Asn) + L-glutamate + ADP + phosphate + 2 H(+). Functionally, allows the formation of correctly charged Asn-tRNA(Asn) or Gln-tRNA(Gln) through the transamidation of misacylated Asp-tRNA(Asn) or Glu-tRNA(Gln) in organisms which lack either or both of asparaginyl-tRNA or glutaminyl-tRNA synthetases. The reaction takes place in the presence of glutamine and ATP through an activated phospho-Asp-tRNA(Asn) or phospho-Glu-tRNA(Gln). The protein is Aspartyl/glutamyl-tRNA(Asn/Gln) amidotransferase subunit B of Neorickettsia sennetsu (strain ATCC VR-367 / Miyayama) (Ehrlichia sennetsu).